A 173-amino-acid chain; its full sequence is Photosystem I assembly protein Ycf3 (173 aa).

TPR repeat units lie at residues 35 to 68 (AFVY…EEDP), 72 to 105 (SYIL…NPRM), and 120 to 153 (GEKA…APNN).

Belongs to the Ycf3 family.

It localises to the cellular thylakoid membrane. Essential for the assembly of the photosystem I (PSI) complex. May act as a chaperone-like factor to guide the assembly of the PSI subunits. The polypeptide is Photosystem I assembly protein Ycf3 (Rippkaea orientalis (strain PCC 8801 / RF-1) (Cyanothece sp. (strain PCC 8801))).